The chain runs to 550 residues: MKSLVLGLLVGSAIASGPLQHVLHAPPDPEPKPEPEPQVVKDPFEELRDTFDRLRNKAGDIWDDVMDNIPNIMSNMRPLTIPAKKFTRRPDSEWTHIVRGADLEALWVDDESGYKHRKIDGKLSQYDLRIKAVDPSDLGIDKVKQYSGYLDDNANDKHLFFWFFESRNDPFGDPVVLWLNGGPGCSSLTGMFFELGPASIDENITANYNPYSWNSNSSIIFLDQPVNVGYSYSSQAVSDTVTAAKDVYALLTLFFTQFRQYSAQDFHIAGESYAGHYIPVFASEILHHNNTNINLQSVLIGNGLTDPLSQYPFYRPMACGDGGYPSVLDSQSCQSMDNALPRCLSMIKSCYDIESTFTCLPASIYCNNALIGPYQKTGRNPYDVRTNCTGNDLCYPQLNYITEYLNKPHVMRSLGVEVDSYESCNMDINRNFLFHGDWMKPYHRLVPSLLARIPVLIYAGDADFICNWLGNKAWTEALEYPGHAKFAEAPMENLTMINSQGKNEVFGEVKSHSNLTFMRIFKAGHMTPFDSPQASLEFANSWLSGEWSEV.

Positions 1–18 (MKSLVLGLLVGSAIASGP) are cleaved as a signal peptide. The propeptide occupies 19 to 131 (LQHVLHAPPD…KLSQYDLRIK (113 aa)). The segment at 20–39 (QHVLHAPPDPEPKPEPEPQV) is disordered. 5 disulfides stabilise this stretch: C185–C424, C319–C333, C343–C366, C350–C359, and C388–C394. N-linked (GlcNAc...) asparagine glycosylation is found at N203 and N216. S272 is an active-site residue. N289 carries N-linked (GlcNAc...) asparagine glycosylation. N387 is a glycosylation site (N-linked (GlcNAc...) asparagine). The active site involves D463. N-linked (GlcNAc...) asparagine glycans are attached at residues N493 and N514. Residue H525 is part of the active site.

The protein belongs to the peptidase S10 family.

It localises to the vacuole. The catalysed reaction is Release of a C-terminal amino acid with broad specificity.. Its function is as follows. Vacuolar carboxypeptidase involved in degradation of small peptides. Digests preferentially peptides containing an aliphatic or hydrophobic residue in P1' position, as well as methionine, leucine or phenylalanine in P1 position of ester substrate. This chain is Carboxypeptidase Y homolog A (CPYA), found in Paracoccidioides brasiliensis (strain Pb18).